We begin with the raw amino-acid sequence, 430 residues long: Sorting nexin-30 (430 aa).

A compositionally biased stretch (polar residues) spans M1–I18. The disordered stretch occupies residues M1–L66. Over residues S57–L66 the composition is skewed to low complexity. A PX domain is found at R80–K201. The a 1,2-diacyl-sn-glycero-3-phospho-(1D-myo-inositol-3-phosphate) site is built by R123, Q125, K153, and R167. Positions K223 to E428 constitute a BAR domain.

It belongs to the sorting nexin family.

The protein localises to the early endosome membrane. In terms of biological role, involved in the regulation of endocytosis and in several stages of intracellular trafficking. Together with snx4, involved in autophagosome assembly. The chain is Sorting nexin-30 (snx30) from Danio rerio (Zebrafish).